The following is a 429-amino-acid chain: Adenylosuccinate synthetase (429 aa).

GTP-binding positions include 12-18 (GDEGKGK) and 40-42 (GHT). The Proton acceptor role is filled by D13. 2 residues coordinate Mg(2+): D13 and G40. Residues 13–16 (DEGK), 38–41 (NAGH), T129, R143, Q223, T238, and R302 contribute to the IMP site. The Proton donor role is filled by H41. Position 298 to 304 (298 to 304 (VVTGRKR)) interacts with substrate. GTP is bound by residues R304, 330–332 (KLD), and 412–414 (STS).

The protein belongs to the adenylosuccinate synthetase family. In terms of assembly, homodimer. It depends on Mg(2+) as a cofactor.

It is found in the cytoplasm. The enzyme catalyses IMP + L-aspartate + GTP = N(6)-(1,2-dicarboxyethyl)-AMP + GDP + phosphate + 2 H(+). Its pathway is purine metabolism; AMP biosynthesis via de novo pathway; AMP from IMP: step 1/2. Functionally, plays an important role in the de novo pathway of purine nucleotide biosynthesis. Catalyzes the first committed step in the biosynthesis of AMP from IMP. The sequence is that of Adenylosuccinate synthetase from Bartonella henselae (strain ATCC 49882 / DSM 28221 / CCUG 30454 / Houston 1) (Rochalimaea henselae).